Reading from the N-terminus, the 231-residue chain is Elongation factor 1-delta 1 (231 aa).

Position 2 is an N-acetylalanine (alanine 2). The region spanning 10–73 (DAGLKKLDEH…LRISGVSAEG (64 aa)) is the GST C-terminal domain. Disordered regions lie at residues 85-108 (TEEAVATPPAADSKDAAADEEDDD) and 116-135 (ETEEEKKAAEERAASVKAST). Residues 119-129 (EEKKAAEERAA) show a composition bias toward basic and acidic residues.

Belongs to the EF-1-beta/EF-1-delta family. In terms of assembly, EF-1 is composed of 4 subunits: alpha, beta (1B-alpha=beta'), delta (1B-beta), and gamma (1B-gamma).

EF-1-beta and EF-1-delta stimulate the exchange of GDP bound to EF-1-alpha to GTP. This chain is Elongation factor 1-delta 1, found in Arabidopsis thaliana (Mouse-ear cress).